Consider the following 190-residue polypeptide: Protein GrpE (190 aa).

The disordered stretch occupies residues 1–42; the sequence is MNEKDNQTTSEPENEQEIIDVNDSGEQPEENETEQPQEEAVE. Acidic residues predominate over residues 26-42; sequence EQPEENETEQPQEEAVE.

It belongs to the GrpE family. Homodimer.

It localises to the cytoplasm. Its function is as follows. Participates actively in the response to hyperosmotic and heat shock by preventing the aggregation of stress-denatured proteins, in association with DnaK and GrpE. It is the nucleotide exchange factor for DnaK and may function as a thermosensor. Unfolded proteins bind initially to DnaJ; upon interaction with the DnaJ-bound protein, DnaK hydrolyzes its bound ATP, resulting in the formation of a stable complex. GrpE releases ADP from DnaK; ATP binding to DnaK triggers the release of the substrate protein, thus completing the reaction cycle. Several rounds of ATP-dependent interactions between DnaJ, DnaK and GrpE are required for fully efficient folding. The protein is Protein GrpE of Oceanobacillus iheyensis (strain DSM 14371 / CIP 107618 / JCM 11309 / KCTC 3954 / HTE831).